The sequence spans 385 residues: tRNA(Met) cytidine acetate ligase (385 aa).

Residues 7–20, Gly101, Asn153, and Arg178 contribute to the ATP site; that span reads VAEY…HEFL.

This sequence belongs to the TmcAL family.

Its subcellular location is the cytoplasm. The catalysed reaction is cytidine(34) in elongator tRNA(Met) + acetate + ATP = N(4)-acetylcytidine(34) in elongator tRNA(Met) + AMP + diphosphate. In terms of biological role, catalyzes the formation of N(4)-acetylcytidine (ac(4)C) at the wobble position of elongator tRNA(Met), using acetate and ATP as substrates. First activates an acetate ion to form acetyladenylate (Ac-AMP) and then transfers the acetyl group to tRNA to form ac(4)C34. This Lactobacillus gasseri (strain ATCC 33323 / DSM 20243 / BCRC 14619 / CIP 102991 / JCM 1131 / KCTC 3163 / NCIMB 11718 / NCTC 13722 / AM63) protein is tRNA(Met) cytidine acetate ligase.